Here is a 484-residue protein sequence, read N- to C-terminus: tRNA sulfurtransferase (484 aa).

Positions Q63–R167 constitute a THUMP domain. ATP-binding positions include L185–I186, K267, G289, and Q298. C346 and C458 are joined by a disulfide. In terms of domain architecture, Rhodanese spans I406–P484. The active-site Cysteine persulfide intermediate is C458.

The protein belongs to the ThiI family.

Its subcellular location is the cytoplasm. The enzyme catalyses [ThiI sulfur-carrier protein]-S-sulfanyl-L-cysteine + a uridine in tRNA + 2 reduced [2Fe-2S]-[ferredoxin] + ATP + H(+) = [ThiI sulfur-carrier protein]-L-cysteine + a 4-thiouridine in tRNA + 2 oxidized [2Fe-2S]-[ferredoxin] + AMP + diphosphate. It catalyses the reaction [ThiS sulfur-carrier protein]-C-terminal Gly-Gly-AMP + S-sulfanyl-L-cysteinyl-[cysteine desulfurase] + AH2 = [ThiS sulfur-carrier protein]-C-terminal-Gly-aminoethanethioate + L-cysteinyl-[cysteine desulfurase] + A + AMP + 2 H(+). Its pathway is cofactor biosynthesis; thiamine diphosphate biosynthesis. Its function is as follows. Catalyzes the ATP-dependent transfer of a sulfur to tRNA to produce 4-thiouridine in position 8 of tRNAs, which functions as a near-UV photosensor. Also catalyzes the transfer of sulfur to the sulfur carrier protein ThiS, forming ThiS-thiocarboxylate. This is a step in the synthesis of thiazole, in the thiamine biosynthesis pathway. The sulfur is donated as persulfide by IscS. The polypeptide is tRNA sulfurtransferase (Shewanella putrefaciens (strain CN-32 / ATCC BAA-453)).